The following is a 717-amino-acid chain: Ribosomal RNA large subunit methyltransferase K/L (717 aa).

One can recognise a THUMP domain in the interval 44–155; the sequence is DAYKVCIYSY…KQFVNVFLCL (112 aa).

The protein belongs to the methyltransferase superfamily. RlmKL family.

The protein resides in the cytoplasm. The enzyme catalyses guanosine(2445) in 23S rRNA + S-adenosyl-L-methionine = N(2)-methylguanosine(2445) in 23S rRNA + S-adenosyl-L-homocysteine + H(+). It carries out the reaction guanosine(2069) in 23S rRNA + S-adenosyl-L-methionine = N(2)-methylguanosine(2069) in 23S rRNA + S-adenosyl-L-homocysteine + H(+). Specifically methylates the guanine in position 2445 (m2G2445) and the guanine in position 2069 (m7G2069) of 23S rRNA. The polypeptide is Ribosomal RNA large subunit methyltransferase K/L (Francisella tularensis subsp. holarctica (strain FTNF002-00 / FTA)).